Reading from the N-terminus, the 326-residue chain is Vitamin B12 import system permease protein BtuC (326 aa).

The next 9 membrane-spanning stretches (helical) occupy residues 15–35 (WLLS…CAGE), 61–81 (LAVL…QALF), 88–108 (PGLL…VLLG), 112–132 (LPGW…TLIL), 146–166 (LLAG…AIYF), 184–204 (GGVD…LIWI), 240–260 (GWMV…GLVI), 274–294 (VLLP…DVVA), and 302–322 (ELPI…WLLL).

This sequence belongs to the binding-protein-dependent transport system permease family. FecCD subfamily. In terms of assembly, the complex is composed of two ATP-binding proteins (BtuD), two transmembrane proteins (BtuC) and a solute-binding protein (BtuF).

Its subcellular location is the cell inner membrane. Functionally, part of the ABC transporter complex BtuCDF involved in vitamin B12 import. Involved in the translocation of the substrate across the membrane. This Salmonella enteritidis PT4 (strain P125109) protein is Vitamin B12 import system permease protein BtuC.